Consider the following 523-residue polypeptide: Polypyrimidine tract-binding protein 3 (523 aa).

The tract at residues 1–25 (MNSSTSAGVYANGNDNKKFKGDRPP) is disordered. RRM domains follow at residues 30-114 (RVLH…NLPN), 153-229 (LRII…FSKL), and 329-403 (SVLL…LSKH). Lys36 participates in a covalent cross-link: Glycyl lysine isopeptide (Lys-Gly) (interchain with G-Cter in SUMO2). Position 98 is a phosphotyrosine (Tyr98). Thr109 carries the phosphothreonine modification. Lys187 is covalently cross-linked (Glycyl lysine isopeptide (Lys-Gly) (interchain with G-Cter in SUMO2)). An N6-acetyllysine modification is found at Lys394. The disordered stretch occupies residues 406-426 (VQLPREGQEDQGLTKDFSNSP). Phosphoserine is present on Ser425. The RRM 4 domain occupies 446–521 (ATLHLSNIPP…HHLRVSFSKS (76 aa)).

In terms of assembly, interacts with THBS4 (via the acidic amphipathic C-terminus).

RNA-binding protein that mediates pre-mRNA alternative splicing regulation. Plays a role in the regulation of cell proliferation, differentiation and migration. Positive regulator of EPO-dependent erythropoiesis. Participates in cell differentiation regulation by repressing tissue-specific exons. Promotes Fas exon 6 skipping. Binds RNA, preferentially to both poly(G) and poly(U). This Mus musculus (Mouse) protein is Polypyrimidine tract-binding protein 3 (Ptbp3).